We begin with the raw amino-acid sequence, 242 residues long: N-acetylmuramate alpha-1-phosphate uridylyltransferase (242 aa).

UTP contacts are provided by residues glycine 16 to arginine 18 and lysine 28. Residue asparagine 113 participates in substrate binding. A Mg(2+)-binding site is contributed by aspartate 115. Aspartate 158 contacts substrate.

This sequence belongs to the nucleotidyltransferase MurU family. As to quaternary structure, monomer. It depends on Mg(2+) as a cofactor.

The catalysed reaction is N-acetyl-alpha-D-muramate 1-phosphate + UDP + H(+) = UDP-N-acetyl-alpha-D-muramate + phosphate. It functions in the pathway cell wall biogenesis; peptidoglycan recycling. In terms of biological role, catalyzes the formation of UDP-N-acetylmuramate (UDP-MurNAc), a crucial precursor of the bacterial peptidoglycan cell wall, from UTP and MurNAc-alpha-1P. Is likely involved in peptidoglycan recycling as part of a cell wall recycling pathway that bypasses de novo biosynthesis of the peptidoglycan precursor UDP-MurNAc. Is able to complement the fosfomycin sensitivity phenotype of a P.putida mutant lacking murU. This Caulobacter vibrioides (strain ATCC 19089 / CIP 103742 / CB 15) (Caulobacter crescentus) protein is N-acetylmuramate alpha-1-phosphate uridylyltransferase.